The primary structure comprises 138 residues: Cysteine desulfuration protein SufE (138 aa).

Cysteine 51 functions as the Cysteine persulfide intermediate in the catalytic mechanism.

Belongs to the SufE family. In terms of assembly, homodimer. Interacts with SufS.

Its subcellular location is the cytoplasm. The protein operates within cofactor biosynthesis; iron-sulfur cluster biosynthesis. In terms of biological role, participates in cysteine desulfuration mediated by SufS. Cysteine desulfuration mobilizes sulfur from L-cysteine to yield L-alanine and constitutes an essential step in sulfur metabolism for biosynthesis of a variety of sulfur-containing biomolecules. Functions as a sulfur acceptor for SufS, by mediating the direct transfer of the sulfur atom from the S-sulfanylcysteine of SufS, an intermediate product of cysteine desulfuration process. The sequence is that of Cysteine desulfuration protein SufE from Salmonella arizonae (strain ATCC BAA-731 / CDC346-86 / RSK2980).